The chain runs to 662 residues: Probable quinol oxidase subunit 1 (662 aa).

2 helical membrane-spanning segments follow: residues 14–34 (WMIISAQIAAPFLVIGLIAVI) and 56–76 (IGIMYLISAVLMFVRGGIDAL). His102 contacts Fe(II)-heme a. Helical transmembrane passes span 103-123 (GVIMIIFMAMPFIFGLWNVVI), 140-160 (VSFWLFFAGMILFNLSFIVGG), 187-207 (IAIQISGIGSLMTGINFFVTI), 228-248 (FITTLIVILAFPVFTVALALM), 273-293 (FFWVWGHPEVYIVILPAFGMY), 311-331 (MIWATAGIAFLSFLVWVHHFF), 336-356 (GALINSFFSISTMLIGVPTGV), and 376-396 (MLFSLAFIPNFLLGGVTGVML). Positions 279, 283, 328, and 329 each coordinate Cu cation. Residues 279 to 283 (HPEVY) constitute a cross-link (1'-histidyl-3'-tyrosine (His-Tyr)). His414 is a heme a3 binding site. Transmembrane regions (helical) follow at residues 415 to 435 (FHYTLVTGVVFACLAGLIFWY), 451 to 471 (CFWFFMIGFNVCFLPQFILGL), 492 to 512 (FISTIGAVLMAIGFLFLVASI), 587 to 604 (PVGFWMGIFMTIGGFFLI), and 608 to 627 (IVPALICLAGIFITMIWRSF). His416 is a binding site for Fe(II)-heme a.

It belongs to the heme-copper respiratory oxidase family. It depends on Cu cation as a cofactor. Ferriheme a is required as a cofactor. Requires Heme A3. as cofactor.

It localises to the cell membrane. It carries out the reaction 2 a quinol + O2 = 2 a quinone + 2 H2O. It participates in energy metabolism; oxidative phosphorylation. In terms of biological role, catalyzes quinol oxidation with the concomitant reduction of oxygen to water. The chain is Probable quinol oxidase subunit 1 (qoxB) from Staphylococcus epidermidis (strain ATCC 35984 / DSM 28319 / BCRC 17069 / CCUG 31568 / BM 3577 / RP62A).